A 1176-amino-acid chain; its full sequence is Pesticidal crystal protein Cry1Ag (1176 aa).

The protein belongs to the delta endotoxin family.

In terms of biological role, promotes colloidosmotic lysis by binding to the midgut epithelial cells of many lepidopteran larvae. The sequence is that of Pesticidal crystal protein Cry1Ag (cry1Ag) from Bacillus thuringiensis.